The following is a 316-amino-acid chain: tRNA dimethylallyltransferase (316 aa).

Position 17–24 (Gly-17–Thr-24) interacts with ATP. Thr-19 to Thr-24 contacts substrate. Interaction with substrate tRNA stretches follow at residues Asp-42–Leu-45, Gln-166–Arg-170, Arg-247–Arg-252, and Lys-280–Arg-287.

It belongs to the IPP transferase family. Monomer. Requires Mg(2+) as cofactor.

It catalyses the reaction adenosine(37) in tRNA + dimethylallyl diphosphate = N(6)-dimethylallyladenosine(37) in tRNA + diphosphate. Its function is as follows. Catalyzes the transfer of a dimethylallyl group onto the adenine at position 37 in tRNAs that read codons beginning with uridine, leading to the formation of N6-(dimethylallyl)adenosine (i(6)A). This chain is tRNA dimethylallyltransferase, found in Shigella flexneri serotype 5b (strain 8401).